A 205-amino-acid polypeptide reads, in one-letter code: MSKRHSAKYKIDRRMGENLWGRPKSPVNQRSYGPGQHGQRRKQKVSDFGLQLRAKQKLKGYYGNLTEKQFSRTYEEAARRKGNTAENLVGLLESRLDAIVYRAKFVPTVFAARQFVNHGHVTVNGKRVNIASYRCKIGDVIAVREKSRNMALVLEAVASSERDFCEYITVDAKGLEASFIRVPELSEVPYPVKMEPNLVVEFYAS.

The interval 1–46 (MSKRHSAKYKIDRRMGENLWGRPKSPVNQRSYGPGQHGQRRKQKVS) is disordered. The 61-residue stretch at 94-154 (SRLDAIVYRA…EKSRNMALVL (61 aa)) folds into the S4 RNA-binding domain.

It belongs to the universal ribosomal protein uS4 family. Part of the 30S ribosomal subunit. Contacts protein S5. The interaction surface between S4 and S5 is involved in control of translational fidelity.

One of the primary rRNA binding proteins, it binds directly to 16S rRNA where it nucleates assembly of the body of the 30S subunit. Its function is as follows. With S5 and S12 plays an important role in translational accuracy. The sequence is that of Small ribosomal subunit protein uS4 from Caulobacter sp. (strain K31).